The sequence spans 270 residues: 4-hydroxy-tetrahydrodipicolinate reductase (270 aa).

NAD(+) is bound by residues 9 to 14 and Glu-35; that span reads GSGGRM. Arg-36 contributes to the NADP(+) binding site. NAD(+)-binding positions include 99–101 and 123–126; these read GTT and ASNY. The active-site Proton donor/acceptor is His-156. Residue His-157 coordinates (S)-2,3,4,5-tetrahydrodipicolinate. Residue Lys-160 is the Proton donor of the active site. 166–167 serves as a coordination point for (S)-2,3,4,5-tetrahydrodipicolinate; that stretch reads GT.

This sequence belongs to the DapB family.

Its subcellular location is the cytoplasm. The enzyme catalyses (S)-2,3,4,5-tetrahydrodipicolinate + NAD(+) + H2O = (2S,4S)-4-hydroxy-2,3,4,5-tetrahydrodipicolinate + NADH + H(+). It carries out the reaction (S)-2,3,4,5-tetrahydrodipicolinate + NADP(+) + H2O = (2S,4S)-4-hydroxy-2,3,4,5-tetrahydrodipicolinate + NADPH + H(+). It participates in amino-acid biosynthesis; L-lysine biosynthesis via DAP pathway; (S)-tetrahydrodipicolinate from L-aspartate: step 4/4. Catalyzes the conversion of 4-hydroxy-tetrahydrodipicolinate (HTPA) to tetrahydrodipicolinate. The polypeptide is 4-hydroxy-tetrahydrodipicolinate reductase (Histophilus somni (strain 2336) (Haemophilus somnus)).